Consider the following 688-residue polypeptide: G protein-coupled receptor kinase 3 (688 aa).

The interval 1–190 (MADLEAVLAD…ELNIHLSMND (190 aa)) is N-terminal. In terms of domain architecture, RGS spans 54–175 (TFDKIFNQKI…MESEKFTRFC (122 aa)). The region spanning 191–453 (FSVHRIIGRG…ARELKEHIFF (263 aa)) is the Protein kinase domain. Residues 197–205 (IGRGGFGEV) and Lys-220 each bind ATP. Asp-317 acts as the Proton acceptor in catalysis. The AGC-kinase C-terminal domain maps to 454-521 (KGIDWQYVYL…MISERWQQEV (68 aa)). One can recognise a PH domain in the interval 558-652 (DCIMHGYMLK…WLKELTCTFN (95 aa)).

This sequence belongs to the protein kinase superfamily. AGC Ser/Thr protein kinase family. GPRK subfamily. In terms of assembly, interacts with GIT1. In terms of processing, ubiquitinated. Expressed in brain cortex, hippocampus, striatum, hypothalamus, cerebellum and brainstem (at protein level).

The protein localises to the postsynapse. Its subcellular location is the presynapse. It catalyses the reaction [beta-adrenergic receptor] + ATP = [beta-adrenergic receptor]-phosphate + ADP + H(+). Specifically phosphorylates the agonist-occupied form of the beta-adrenergic and closely related receptors. In Rattus norvegicus (Rat), this protein is G protein-coupled receptor kinase 3.